The chain runs to 208 residues: Octanoyltransferase (208 aa).

Residues 29 to 208 (KTQDELVWLL…KEFNKVFCNC (180 aa)) form the BPL/LPL catalytic domain. Residues 68-75 (RGGKYTYH), 140-142 (AFG), and 153-155 (GVS) contribute to the substrate site. C171 functions as the Acyl-thioester intermediate in the catalytic mechanism.

It belongs to the LipB family.

It is found in the cytoplasm. It carries out the reaction octanoyl-[ACP] + L-lysyl-[protein] = N(6)-octanoyl-L-lysyl-[protein] + holo-[ACP] + H(+). It functions in the pathway protein modification; protein lipoylation via endogenous pathway; protein N(6)-(lipoyl)lysine from octanoyl-[acyl-carrier-protein]: step 1/2. Its function is as follows. Catalyzes the transfer of endogenously produced octanoic acid from octanoyl-acyl-carrier-protein onto the lipoyl domains of lipoate-dependent enzymes. Lipoyl-ACP can also act as a substrate although octanoyl-ACP is likely to be the physiological substrate. The polypeptide is Octanoyltransferase (Ehrlichia ruminantium (strain Gardel)).